The primary structure comprises 203 residues: Outer-membrane lipoprotein carrier protein (203 aa).

Residues 1-21 form the signal peptide; that stretch reads MKKMAIACALLSSVVASSVWA. The segment at 178–203 is disordered; the sequence is QQNGAVDPSKFTFTPPQGVTIDDQRK.

The protein belongs to the LolA family. Monomer.

It is found in the periplasm. Its function is as follows. Participates in the translocation of lipoproteins from the inner membrane to the outer membrane. Only forms a complex with a lipoprotein if the residue after the N-terminal Cys is not an aspartate (The Asp acts as a targeting signal to indicate that the lipoprotein should stay in the inner membrane). This is Outer-membrane lipoprotein carrier protein from Salmonella paratyphi A (strain ATCC 9150 / SARB42).